The following is a 109-amino-acid chain: Peptide chaperone MftB (109 aa).

It belongs to the peptide chaperone MftB family. Interacts with MftA and MftC.

In terms of biological role, peptide chaperone involved in the biosynthesis of the enzyme cofactor mycofactocin (MFT). Binds MftA and MftC with high affinity, and is essential for MftC activity on MftA, likely via the formation of a ternary complex. This chain is Peptide chaperone MftB, found in Mycobacterium ulcerans (strain Agy99).